Here is a 217-residue protein sequence, read N- to C-terminus: MLGEEAEPQWISEEVKTGTTIIAIEFNGGVVLGSDSRVSAGDSVVNRVMNKLSPLHDKIYCALSGSAADAQTIAEMVNYQLDVHSLEIDEDPQVRSAATLVKNISYKYKEELSAHLIVAGWDRRDGGQVFATLGGLLTRQPFAIGGSGSSYVYGFVDAEYRRGMTKEECQKFVVNTLALAMNRDGSSGGVAYIVTIDEHSTDEKVILGNDLPTFFDQ.

Positions 1-18 (MLGEEAEPQWISEEVKTG) are cleaved as a propeptide — removed in mature form. Catalysis depends on threonine 19, which acts as the Nucleophile.

Belongs to the peptidase T1B family. The 26S proteasome consists of a 20S proteasome core and two 19S regulatory subunits. The 20S proteasome core is composed of 28 subunits that are arranged in four stacked rings, resulting in a barrel-shaped structure. The two end rings are each formed by seven alpha subunits, and the two central rings are each formed by seven beta subunits. The catalytic chamber with the active sites is on the inside of the barrel. Component of the immunoproteasome, where it displaces the equivalent housekeeping subunit PSMB6. Autocleaved. The resulting N-terminal Thr residue of the mature subunit is responsible for the nucleophile proteolytic activity.

The protein resides in the cytoplasm. It localises to the nucleus. It catalyses the reaction Cleavage of peptide bonds with very broad specificity.. Functionally, the proteasome is a multicatalytic proteinase complex which is characterized by its ability to cleave peptides with Arg, Phe, Tyr, Leu, and Glu adjacent to the leaving group at neutral or slightly basic pH. The proteasome has an ATP-dependent proteolytic activity. This subunit is involved in antigen processing to generate class I binding peptides. The protein is Proteasome subunit beta type-9 (psmb9) of Oryzias latipes (Japanese rice fish).